Consider the following 246-residue polypeptide: Large ribosomal subunit protein uL3 (246 aa).

Positions serine 140–methionine 162 are disordered. Residue glutamine 151 is modified to N5-methylglutamine.

Belongs to the universal ribosomal protein uL3 family. As to quaternary structure, part of the 50S ribosomal subunit. Forms a cluster with proteins L14 and L19. Methylated by PrmB.

Its function is as follows. One of the primary rRNA binding proteins, it binds directly near the 3'-end of the 23S rRNA, where it nucleates assembly of the 50S subunit. This chain is Large ribosomal subunit protein uL3, found in Methylobacterium sp. (strain 4-46).